Reading from the N-terminus, the 113-residue chain is Endoribonuclease SymE (113 aa).

The SpoVT-AbrB domain maps to 29–74 (SRYPDYSRIPAITLKGQWLEAAGFATGTAVDVKVMEGCIVLTAQPA).

It belongs to the SymE family.

The protein resides in the cytoplasm. Functionally, involved in the degradation and recycling of damaged RNA. It is itself a target for degradation by the ATP-dependent protease Lon. This Shigella flexneri serotype 5b (strain 8401) protein is Endoribonuclease SymE.